The following is a 363-amino-acid chain: 3-dehydroquinate synthase (363 aa).

Residues 75–80 (DAEEGK), 109–113 (GAVTD), 133–134 (TS), lysine 146, lysine 155, and 173–176 (TLDT) each bind NAD(+). Zn(2+) contacts are provided by glutamate 188, histidine 251, and histidine 267.

This sequence belongs to the sugar phosphate cyclases superfamily. Dehydroquinate synthase family. Requires Co(2+) as cofactor. It depends on Zn(2+) as a cofactor. NAD(+) is required as a cofactor.

It localises to the cytoplasm. It catalyses the reaction 7-phospho-2-dehydro-3-deoxy-D-arabino-heptonate = 3-dehydroquinate + phosphate. The protein operates within metabolic intermediate biosynthesis; chorismate biosynthesis; chorismate from D-erythrose 4-phosphate and phosphoenolpyruvate: step 2/7. Functionally, catalyzes the conversion of 3-deoxy-D-arabino-heptulosonate 7-phosphate (DAHP) to dehydroquinate (DHQ). The sequence is that of 3-dehydroquinate synthase from Pseudarthrobacter chlorophenolicus (strain ATCC 700700 / DSM 12829 / CIP 107037 / JCM 12360 / KCTC 9906 / NCIMB 13794 / A6) (Arthrobacter chlorophenolicus).